A 398-amino-acid chain; its full sequence is MASTSLLKASPVLDKSEWVKGQSVLFRQPSSASVVLRNRATSLTVRAASSYADELVKTAKTIASPGRGILAMDESNATCGKRLDSIGLENTEANRQAFRTLLVSAPGLGQYVSGAILFEETLYQSTTEGKKMVDVLVEQNIVPGIKVDKGLVPLVGSNNESWCQGLDGLSSRTAAYYQQGARFAKWRTVVSIPNGPSALAVKEAAWGLARYAAISQDSGLVPIVEPEILLDGEHDIDRTYDVAEKVWAEVFFYLAQNNVMFEGILLKPSMVTPGAESKDRATPEQVAAYTLKLLRNRVPPAVPGIMFLSGGQSEVEATLNLNAMNQAPNPWHVSFSYARALQNTCLKTWGGRPENVNAAQTTLLARAKANSLAQLGKYTGEGESEEAKEGMFVKGYTY.

The N-terminal 46 residues, 1–46 (MASTSLLKASPVLDKSEWVKGQSVLFRQPSSASVVLRNRATSLTVR), are a transit peptide targeting the chloroplast. A substrate-binding site is contributed by Arg95. Phosphoserine is present on Ser157. Lys185 is a binding site for substrate. Ser215 is subject to Phosphoserine. Glu225 functions as the Proton acceptor in the catalytic mechanism. The active-site Schiff-base intermediate with dihydroxyacetone-P is the Lys267. 309-311 (SGG) contributes to the substrate binding site. N6,N6,N6-trimethyllysine is present on Lys394.

The protein belongs to the class I fructose-bisphosphate aldolase family. As to quaternary structure, homotetramer. Post-translationally, can be trimethylated at Lys-394 by LSMT-L. The methylation level has no influence on the ologomerization state or on the kinetic properties of the enzyme. Phosphorylated on tyrosine residues in response to abscisic acid (ABA) in germinating seeds. In terms of tissue distribution, highly expressed in rosettes leaves.

It is found in the plastid. The protein resides in the chloroplast. It localises to the plastoglobule. The protein localises to the chloroplast stroma. The enzyme catalyses beta-D-fructose 1,6-bisphosphate = D-glyceraldehyde 3-phosphate + dihydroxyacetone phosphate. It participates in carbohydrate degradation; glycolysis; D-glyceraldehyde 3-phosphate and glycerone phosphate from D-glucose: step 4/4. In terms of biological role, plays a key role in glycolysis and gluconeogenesis. This is Fructose-bisphosphate aldolase 2, chloroplastic from Arabidopsis thaliana (Mouse-ear cress).